Here is a 284-residue protein sequence, read N- to C-terminus: ATP synthase subunit a (284 aa).

6 consecutive transmembrane segments (helical) span residues 55-75 (AIHV…LGLF), 116-136 (IAPL…LKLI), 165-185 (FGMS…VKGV), 196-216 (PFNH…ALII), 234-254 (VVFI…NVPW), and 255-275 (AIFH…LTVV).

Belongs to the ATPase A chain family. In terms of assembly, F-type ATPases have 2 components, CF(1) - the catalytic core - and CF(0) - the membrane proton channel. CF(1) has five subunits: alpha(3), beta(3), gamma(1), delta(1), epsilon(1). CF(0) has three main subunits: a(1), b(2) and c(9-12). The alpha and beta chains form an alternating ring which encloses part of the gamma chain. CF(1) is attached to CF(0) by a central stalk formed by the gamma and epsilon chains, while a peripheral stalk is formed by the delta and b chains.

It is found in the cell inner membrane. In terms of biological role, key component of the proton channel; it plays a direct role in the translocation of protons across the membrane. This is ATP synthase subunit a from Marinobacter nauticus (strain ATCC 700491 / DSM 11845 / VT8) (Marinobacter aquaeolei).